The following is a 1693-amino-acid chain: Serine protease filzig (1693 aa).

Over 1–47 (MFKWVTPASTATLSRCTLPATTAATTTTTAMAATRTATTTTRTTRPQ) the chain is Cytoplasmic. A helical; Signal-anchor for type II membrane protein membrane pass occupies residues 48–68 (LLSIALTSLIIIVASFVPTTS). Residues 69 to 1693 (GFRSIETNGG…PWLRSITGVK (1625 aa)) are Extracellular-facing. 4 disordered regions span residues 170–198 (QQSAAQSSFESYGEQQQSLSEEQVAQQPS), 212–321 (QQLD…NDDF), 352–465 (GLQD…THPG), and 477–524 (STGY…TTVS). 2 stretches are compositionally biased toward polar residues: residues 178-198 (FESYGEQQQSLSEEQVAQQPS) and 212-222 (QQLDSSSSISP). Composition is skewed to low complexity over residues 230-241 (EPQQQEYQSESE) and 252-268 (TSSSSTEATQSQSSSAS). The segment covering 274–294 (EPSQPADASNDQTTQKINKQP) has biased composition (polar residues). 3 stretches are compositionally biased toward low complexity: residues 358–404 (SSES…PTQK), 422–431 (QQKPQQVAKP), and 488–501 (EPPKQQQQQQPAEQ). Positions 502-524 (SYISSSTSAKRPTTGHNSPTTVS) are enriched in polar residues. N-linked (GlcNAc...) asparagine glycans are attached at residues N541 and N582. 3 disordered regions span residues 615-635 (QDASAAVSQSAEMPTARPGYG), 752-1007 (HYNP…PPAT), and 1057-1090 (YAHRPTSSGSYGHKKPGFVQINGTPKPPRPTVLI). Polar residues predominate over residues 771-799 (SVSSHTTKVQEQMDETSNGYQQSETTSGY). A compositionally biased stretch (basic residues) spans 836-847 (PRPKPSTKRPAV). 2 stretches are compositionally biased toward polar residues: residues 951 to 962 (QYDQPSAPSASY) and 989 to 1000 (KPISTSYVTGPS). 2 N-linked (GlcNAc...) asparagine glycosylation sites follow: N1215 and N1272. Low complexity-rich tracts occupy residues 1297-1307 (PVRTATTTRPK), 1331-1353 (TTTRKPATRRTTVAAKVTTTTRR), and 1362-1376 (RVSSTVKTTTVSSAR). The segment at 1297–1435 (PVRTATTTRP…TPNLAFHSPS (139 aa)) is disordered. Positions 1380–1391 (DEIVDEEDEEDV) are enriched in acidic residues. A Peptidase S1 domain is found at 1449–1691 (IVGGKGSTFG…YKPWLRSITG (243 aa)). A disulfide bridge connects residues C1480 and C1496. Residues H1495 and D1544 each act as charge relay system in the active site. Intrachain disulfides connect C1608–C1627 and C1638–C1667. S1642 serves as the catalytic Charge relay system.

This sequence belongs to the peptidase S1 family.

Its subcellular location is the cell membrane. Functionally, probable endopeptidase. In tracheal terminal cells, acts downstream of ich to regulate seamless tube growth and/or maintenance probably by processing lumenal matrix proteins. The sequence is that of Serine protease filzig from Drosophila melanogaster (Fruit fly).